A 269-amino-acid chain; its full sequence is Lysyl endopeptidase (269 aa).

Cystine bridges form between cysteine 6-cysteine 216, cysteine 12-cysteine 80, and cysteine 36-cysteine 58. Residues histidine 57, aspartate 113, and serine 194 each act as charge relay system in the active site.

The protein belongs to the peptidase S1 family.

Its subcellular location is the secreted. The catalysed reaction is Preferential cleavage: Lys-|-Xaa, including Lys-|-Pro.. Functionally, highly specific endopeptidase that hydrolyzes lysyl bonds including the Lys-Pro bond. In Lysobacter enzymogenes, this protein is Lysyl endopeptidase.